The sequence spans 345 residues: L-threonine 3-dehydrogenase (345 aa).

Position 39 (C39) interacts with Zn(2+). Catalysis depends on charge relay system residues T41 and H44. Positions 64, 65, 94, 97, 100, and 108 each coordinate Zn(2+). Residues I176, D196, R201, 263-265 (LGI), and 287-288 (VY) contribute to the NAD(+) site.

The protein belongs to the zinc-containing alcohol dehydrogenase family. As to quaternary structure, homotetramer. It depends on Zn(2+) as a cofactor.

It localises to the cytoplasm. It catalyses the reaction L-threonine + NAD(+) = (2S)-2-amino-3-oxobutanoate + NADH + H(+). It participates in amino-acid degradation; L-threonine degradation via oxydo-reductase pathway; glycine from L-threonine: step 1/2. In terms of biological role, catalyzes the NAD(+)-dependent oxidation of L-threonine to 2-amino-3-ketobutyrate. This chain is L-threonine 3-dehydrogenase, found in Anaeromyxobacter sp. (strain K).